Here is a 399-residue protein sequence, read N- to C-terminus: uncharacterized protein (399 aa).

8 WD repeats span residues 59 to 99, 102 to 141, 144 to 185, 187 to 227, 241 to 280, 283 to 322, 324 to 363, and 366 to 399; these read EHKD…QICQ, GHKD…EFIT, ETVD…QVMY, HTAP…PECR, ETAA…ILAS, AQTE…FRKS, PHEQ…LLGE, and GHQE…DCEH.

Its subcellular location is the cytoplasm. The protein localises to the nucleus. This is an uncharacterized protein from Schizosaccharomyces pombe (strain 972 / ATCC 24843) (Fission yeast).